Reading from the N-terminus, the 2326-residue chain is Probable voltage-dependent N-type calcium channel subunit alpha-1B (2326 aa).

Residues 1-83 (MARLGNDVPA…DNIIRKYAKR (83 aa)) are Cytoplasmic-facing. Residues 17–37 (AGGGRGANRHAGPQAGQRGMY) form a disordered region. Residues 75 to 351 (NIIRKYAKRI…LVLGVLSGEF (277 aa)) form an I repeat. The chain crosses the membrane as a helical span at residues 84–107 (ITEWPPFEYMILATIIANCIVLAL). Over 108-124 (EQHLPDGDKTPMSERLD) the chain is Extracellular. The helical transmembrane segment at 125-145 (DTEPYFIGIFCFEAGIKIIAL) threads the bilayer. Topologically, residues 146 to 156 (GFAFHKGSYLR) are cytoplasmic. The helical transmembrane segment at 157–175 (NGWNVMDFVVVLTGILTTI) threads the bilayer. At 176 to 180 (GTDFD) the chain is on the extracellular side. Residues 181–204 (LRTLRAVRVLRPLKLVSGIPSLQV) form a helical membrane-spanning segment. Topologically, residues 205–214 (VLKSIMKAMV) are cytoplasmic. Residues 215–237 (PLLQIGLLLFFAILMFAIIGLEF) form a helical membrane-spanning segment. Residues 238–323 (YMGKFHKTCF…TANDALGNTW (86 aa)) are Extracellular-facing. Asn-271 carries N-linked (GlcNAc...) asparagine glycosylation. Residues 324–348 (NWLYFIPLIVIGSFFMLNLVLGVLS) traverse the membrane as a helical segment. Over 349 to 472 (GEFAKERERV…FFIRRMVKSQ (124 aa)) the chain is Cytoplasmic. The binding to the beta subunit stretch occupies residues 371–388 (QQVEQEFNRYLRWIHIAE). An II repeat occupies 458 to 702 (EKRFRFFIRR…VFLAIAVDNL (245 aa)). The helical transmembrane segment at 473-491 (SFYWIVLCLVGLNTLCVAI) threads the bilayer. Over 492–501 (VHYDQPPLLT) the chain is Extracellular. The chain crosses the membrane as a helical span at residues 502–524 (DALYFAEFVFLGLFLTEMSLKMY). Topologically, residues 525–534 (GLGPRNYFHS) are cytoplasmic. Position 534 (Ser-534) interacts with a 1,2-diacyl-sn-glycero-3-phospho-(1D-myo-inositol-4,5-bisphosphate). Residues 535 to 556 (SFNCFDFGVIVGSIFEVVWTAV) traverse the membrane as a helical segment. Residues 557-563 (KPDTSFG) are Extracellular-facing. Residues 564–576 (ISVLRALRLLRIF) form a helical membrane-spanning segment. Residues Arg-574 and Lys-577 each contribute to the a 1,2-diacyl-sn-glycero-3-phospho-(1D-myo-inositol-4,5-bisphosphate) site. Residues 577–594 (KVTKYWNSLRNLVVSLLN) are Cytoplasmic-facing. Residues 595 to 620 (SMKSIISLLFLLFLFIVVFALLGMQL) traverse the membrane as a helical segment. The Extracellular portion of the chain corresponds to 621–672 (FGGQFNFEDGTPPTNFDTFPAAILTVFQILTGEDWNEVMYYGIEAHGGVKKG). The chain crosses the membrane as a helical span at residues 673–699 (MFSSVYFIILTLFGNYTLLNVFLAIAV). Over 700-1148 (DNLANAQELT…ACHYIVNLRY (449 aa)) the chain is Cytoplasmic. A disordered region spans residues 793-1048 (SHQIRPDMKT…LQHLPQQPED (256 aa)). Basic and acidic residues-rich tracts occupy residues 796–808 (IRPDMKTHLDRPL), 854–879 (KLGEQDKGDGALDTGEPRANSKDDKR), 886–908 (SKETEKERDEKGRKGERSRSHEG), 935–979 (HGTE…EGAE), and 994–1011 (SEEKREIGEKERETVLRE). A compositionally biased stretch (polar residues) spans 1020-1032 (TQPSQDSGTQGNV). Residues 1134–1416 (NPVRRACHYI…IFVALIIITF (283 aa)) form an III repeat. A helical membrane pass occupies residues 1149–1167 (FEMCILLVITMSSIALAAE). Topologically, residues 1168 to 1175 (DPVQGDAP) are extracellular. Residues 1176–1200 (RNNVLKYLDYVFTGVFTFEMVIKMI) traverse the membrane as a helical segment. At 1201–1214 (NLGLILHPGSYFRD) the chain is on the cytoplasmic side. The helical transmembrane segment at 1215 to 1235 (LWNILDFIVVSGALVAFAFTG) threads the bilayer. At 1236 to 1241 (SRGKDL) the chain is on the extracellular side. The chain crosses the membrane as a helical span at residues 1242 to 1262 (NTIKSLRVLRVLRPLKTIKRL). Over 1263 to 1280 (PKLKAVFDCVVNSLKNVL) the chain is Cytoplasmic. The chain crosses the membrane as a helical span at residues 1281 to 1300 (NILIVYMLFMFIFAVIAVQL). Residues 1301–1387 (FKGKFFYCTD…DQGPSPSYRM (87 aa)) lie on the Extracellular side of the membrane. Residues 1388 to 1413 (EMSIFYVVYFVVFPFFFVNIFVALII) form a helical membrane-spanning segment. Residues 1414–1468 (ITFQEQGDKVMSDCSLEKNERACIDFAISAKPLTRYMPQNKQTFQYKMWKFVVSP) lie on the Cytoplasmic side of the membrane. Residues 1453 to 1708 (NKQTFQYKMW…LFVAVIMDNF (256 aa)) form an IV repeat. A helical membrane pass occupies residues 1469–1487 (PFEYLIMALIALNTIVLMM). Residues 1488–1495 (KFYNAPDP) lie on the Extracellular side of the membrane. The chain crosses the membrane as a helical span at residues 1496–1520 (YDRMLQYLNILFTFLFSMECVLKLI). Topologically, residues 1521–1530 (GFGVLNYFRD) are cytoplasmic. Residues 1531–1552 (AWNVFDFVTVLGSITDILVTEL) traverse the membrane as a helical segment. Topologically, residues 1553–1558 (ADSFIN) are extracellular. Asn-1558 is a glycosylation site (N-linked (GlcNAc...) asparagine). The helical transmembrane segment at 1559-1577 (LSFLRLFRAARLIKLLRQG) threads the bilayer. The Cytoplasmic segment spans residues 1578 to 1596 (YTIRILLWTFVQSFKALPY). The helical transmembrane segment at 1597-1616 (VCLLIAMLFFIYAIIGMQVF) threads the bilayer. The Extracellular portion of the chain corresponds to 1617 to 1680 (GNIELDDDGA…IDGDECGSNF (64 aa)). Residues 1681-1704 (AYFYFVSFIFFSSFLMLNLFVAVI) form a helical membrane-spanning segment. Residues 1705–2326 (MDNFEYLTRD…YRETDEDDWC (622 aa)) are Cytoplasmic-facing. An EF-hand domain is found at 1721–1756 (HHLDEFIRVWAEYDPGARGRITYNDMYEMLRHMCPP). Asp-1734, Arg-1740, and Asp-1745 together coordinate Ca(2+). The segment covering 1897 to 1912 (EEPSSYSTSHKNSVNP) has biased composition (polar residues). Disordered regions lie at residues 1897–1916 (EEPSSYSTSHKNSVNPLYQG), 1932–1954 (CAEGKKEVPESHPEEAGVTKSSS), 2039–2242 (PHHH…SSDP), and 2271–2326 (TTAT…DDWC). Positions 1932 to 1948 (CAEGKKEVPESHPEEAG) are enriched in basic and acidic residues. Residues 2039–2055 (PHHHHHHHRCHHRREKK) show a composition bias toward basic residues. Basic and acidic residues-rich tracts occupy residues 2056–2069 (QRSLERATNRHADE) and 2077–2104 (QLRDQSSKERERGRSQERRPPSSAEKQR). 3 stretches are compositionally biased toward polar residues: residues 2142–2161 (GSGSVNDSPLQSASGSSTPS), 2275–2289 (GRSPRTSSFTTQPPQ), and 2302–2311 (GRSTGPSTAA).

The protein belongs to the calcium channel alpha-1 subunit (TC 1.A.1.11) family. Multisubunit complex consisting of alpha-1, alpha-2, beta and delta subunits in a 1:1:1:1 ratio. The channel activity is directed by the pore-forming and voltage-sensitive alpha-1 subunit. In many cases, this subunit is sufficient to generate voltage-sensitive calcium channel activity. The auxiliary subunits beta and alpha-2/delta linked by a disulfide bridge regulate the channel activity. Post-translationally, phosphorylated in vitro by CaM-kinase II, PKA, PKC and CGPK. As to expression, expression is higher in the electric lobe than in the forebrain.

Its subcellular location is the membrane. Its function is as follows. The isoform alpha-1B gives rise to N-type calcium currents. N-type calcium channels belong to the 'high-voltage activated' (HVA) group. This is Probable voltage-dependent N-type calcium channel subunit alpha-1B from Diplobatis ommata (Ocellated electric ray).